A 373-amino-acid chain; its full sequence is Flagellar P-ring protein (373 aa).

The N-terminal stretch at methionine 1–alanine 30 is a signal peptide.

It belongs to the FlgI family. In terms of assembly, the basal body constitutes a major portion of the flagellar organelle and consists of four rings (L,P,S, and M) mounted on a central rod.

It localises to the periplasm. Its subcellular location is the bacterial flagellum basal body. Assembles around the rod to form the L-ring and probably protects the motor/basal body from shearing forces during rotation. The chain is Flagellar P-ring protein from Aliivibrio fischeri (strain ATCC 700601 / ES114) (Vibrio fischeri).